A 654-amino-acid chain; its full sequence is Cytochrome B pre-mRNA-processing protein 1 (654 aa).

The protein localises to the mitochondrion. Functionally, responsible for conferring a stable 5'-end on cytochrome b mRNA. This chain is Cytochrome B pre-mRNA-processing protein 1 (CBP1), found in Saccharomyces cerevisiae (strain ATCC 204508 / S288c) (Baker's yeast).